The following is a 457-amino-acid chain: Multidrug resistance protein MdtK (457 aa).

A run of 12 helical transmembrane segments spans residues Leu11–Val31, Ile53–Ala73, Trp93–Ile113, Ala127–Leu147, Gly160–Tyr180, Leu188–Met208, Leu243–Ile263, Phe280–Gly300, Tyr316–Leu336, Leu357–Val377, Ile387–Gly407, and Pro418–Ala438.

Belongs to the multi antimicrobial extrusion (MATE) (TC 2.A.66.1) family. MdtK subfamily.

It is found in the cell inner membrane. Its function is as follows. Multidrug efflux pump that functions probably as a Na(+)/drug antiporter. The chain is Multidrug resistance protein MdtK from Photorhabdus laumondii subsp. laumondii (strain DSM 15139 / CIP 105565 / TT01) (Photorhabdus luminescens subsp. laumondii).